The chain runs to 108 residues: V-type proton ATPase subunit G (108 aa).

Residues 48 to 60 show a composition bias toward basic and acidic residues; sequence YASKKEEEFKKSE. A disordered region spans residues 48–89; the sequence is YASKKEEEFKKSESQASGIYSQAEAESKKQVQDTFASIETSS. Residues 79 to 89 are compositionally biased toward polar residues; sequence QDTFASIETSS.

This sequence belongs to the V-ATPase G subunit family. In terms of assembly, V-ATPase is a heteromultimeric enzyme composed of a peripheral catalytic V1 complex (components A to H) attached to an integral membrane V0 proton pore complex (components: a, c, c', c'', d, e, f and VOA1).

It is found in the vacuole membrane. Functionally, subunit of the V1 complex of vacuolar(H+)-ATPase (V-ATPase), a multisubunit enzyme composed of a peripheral complex (V1) that hydrolyzes ATP and a membrane integral complex (V0) that translocates protons. V-ATPase is responsible for acidifying and maintaining the pH of intracellular compartments. This chain is V-type proton ATPase subunit G (vma10), found in Schizosaccharomyces pombe (strain 972 / ATCC 24843) (Fission yeast).